Reading from the N-terminus, the 202-residue chain is Na(+)-translocating NADH-quinone reductase subunit E (202 aa).

The next 6 helical transmembrane spans lie at 11–31 (SVFI…FIAI), 35–55 (VETA…TVPA), 81–101 (FLGF…LEML), 114–134 (GIYL…LFMV), 144–164 (VVYG…LAGI), and 180–200 (LGIA…FSGI).

It belongs to the NqrDE/RnfAE family. In terms of assembly, composed of six subunits; NqrA, NqrB, NqrC, NqrD, NqrE and NqrF.

It localises to the cell inner membrane. It catalyses the reaction a ubiquinone + n Na(+)(in) + NADH + H(+) = a ubiquinol + n Na(+)(out) + NAD(+). Functionally, NQR complex catalyzes the reduction of ubiquinone-1 to ubiquinol by two successive reactions, coupled with the transport of Na(+) ions from the cytoplasm to the periplasm. NqrA to NqrE are probably involved in the second step, the conversion of ubisemiquinone to ubiquinol. This Azotobacter vinelandii (strain DJ / ATCC BAA-1303) protein is Na(+)-translocating NADH-quinone reductase subunit E.